Here is a 323-residue protein sequence, read N- to C-terminus: Lipoyl synthase (323 aa).

Cysteine 61, cysteine 66, cysteine 72, cysteine 87, cysteine 91, cysteine 94, and serine 303 together coordinate [4Fe-4S] cluster. Residues 73–292 (WTKKTATFLV…EQYGLSIGIP (220 aa)) form the Radical SAM core domain.

It belongs to the radical SAM superfamily. Lipoyl synthase family. [4Fe-4S] cluster is required as a cofactor.

It is found in the cytoplasm. It catalyses the reaction [[Fe-S] cluster scaffold protein carrying a second [4Fe-4S](2+) cluster] + N(6)-octanoyl-L-lysyl-[protein] + 2 oxidized [2Fe-2S]-[ferredoxin] + 2 S-adenosyl-L-methionine + 4 H(+) = [[Fe-S] cluster scaffold protein] + N(6)-[(R)-dihydrolipoyl]-L-lysyl-[protein] + 4 Fe(3+) + 2 hydrogen sulfide + 2 5'-deoxyadenosine + 2 L-methionine + 2 reduced [2Fe-2S]-[ferredoxin]. It participates in protein modification; protein lipoylation via endogenous pathway; protein N(6)-(lipoyl)lysine from octanoyl-[acyl-carrier-protein]: step 2/2. In terms of biological role, catalyzes the radical-mediated insertion of two sulfur atoms into the C-6 and C-8 positions of the octanoyl moiety bound to the lipoyl domains of lipoate-dependent enzymes, thereby converting the octanoylated domains into lipoylated derivatives. The polypeptide is Lipoyl synthase (Protochlamydia amoebophila (strain UWE25)).